The chain runs to 1100 residues: MAIAHFSASIVSRGDGRSVVLSAAYQHCAKMEYEREARTIDYTRKQGLVHQEFILPADAPKWVRALIADCSVAGASEAFWNKVEAFEKRSDAQLARDLTIALPRELTSEQNIALVRDFVEKHILGKGMVADWVYHDNPGNPHIHLMTTLRPLTEDGFGAKKVAVIGEDGQLVRTKSGKILYELWAGSTDDFNVVRDGWFERLNHHLTLGGIDLKIDGRSYEKQGIDLEPTIHLGVGAKAISRKAEQQGVRPELERIELNEERRSENTRRILKNPAIVLDLIMREKSVFDERDVAKVLHRYVDDPAVFQQLMLRIILNPEVLRLQRDTIEFATGEKVPARYSTRAMIRLEATMARQAMWLSDKETHAVSTAVLAATFGRHGRLSEEQKAAIECIAGPARIAAVVGRAGAGKTTMMKAAREAWELAGYRVVGGALAGKASEGLDKEAGIESRTLSSWELRWNRGRDVLDNKTVFVMDEAGMVASKQMAGFVDAVVRAGAKIVLVGDPEQLQPIEAGAAFRAIVDRIGYAELETIYRQREDWMRKASLDLARGNVEKALALYNANARIVGERLKAEAVERLIADWNRDYDQTKTTLILAHLRRDVRMLNVMAREKLVERGIVGEGHVFRTADGERRFHAGDQIVFLKNETLLGVKNGMIGHVVEAVPNRIVAVVGDRDHRRHVVVEQRFYSNLDHGYATTIHKSQGATVDRVKVLASLSLDRHLTYVAMTRHREDLQLYYGCRSFAFNGGLAKVLSRKNAKETTLDYERGKLYREALRFAENRGLHIMQVARTMLRDRLDWTLRQKTKVSDLVHRLRALGERLGLDQSPKTQTMKEAAPMVTGIKTFSGSVADTVGDKLGADPTLKQQWEEVSARFRYVFADPETAFRAVNFDTVLADKEAAKAVLQKLEAEPASIGALKGKTGILASKTEREARRVAEVNVPALKRDLEQYLRMRETATLRIVTEEQALRQRVSIDIPALSPAARVVLERVRDAIDRNDLPAALGYALSNRETKLEIDGFNQAVTERFGERTLLSNVAREPSGKLYEKLSDGMRPEQKEQLKQAWPIMRTAQQLAAHERTVQSLKQAEELRQTLRQAPVLKQ.

An ATP-binding site is contributed by Gly404 to Thr411.

This sequence belongs to the MobA/MobL family.

The sequence is that of Conjugal transfer protein TraA (traA) from Agrobacterium fabrum (strain C58 / ATCC 33970) (Agrobacterium tumefaciens (strain C58)).